The sequence spans 491 residues: Synaptotagmin-9 (491 aa).

Residues 1–52 (MPGARDALCHQALQLLAELCARGALEHDSCQDFIYHLRDRARPRLRDPDISV) are Vesicular-facing. The tract at residues 9 to 31 (CHQALQLLAELCARGALEHDSCQ) is cysteine motif. A helical membrane pass occupies residues 53 to 73 (SLLTLVVTACGLALFGVSLFV). At 74–491 (SWKLCWVPWR…AHWHSLLEKR (418 aa)) the chain is on the cytoplasmic side. Over residues 91 to 104 (SKDNNQEPLNYTDT) the composition is skewed to polar residues. Residues 91-147 (SKDNNQEPLNYTDTETNEQENSEDFLDPPTPCPDSSMKISHTSPDIPLSTQPGGQDN) form a disordered region. A compositionally biased stretch (acidic residues) spans 105-116 (ETNEQENSEDFL). The segment covering 127 to 144 (MKISHTSPDIPLSTQPGG) has biased composition (polar residues). Ser177 carries the phosphoserine modification. 2 consecutive C2 domains span residues 220-341 (ACGK…ILWK) and 352-485 (DLGE…AHWH). Positions 251, 257, 309, 310, 311, 314, 317, 383, 389, 443, and 445 each coordinate Ca(2+).

Belongs to the synaptotagmin family. As to quaternary structure, homodimer; disulfide-linked via the cysteine motif. Can also form heterodimers with SYT3, SYT6, SYT7 and SYT10. Requires Ca(2+) as cofactor.

The protein resides in the cytoplasmic vesicle. It localises to the secretory vesicle. The protein localises to the synaptic vesicle membrane. Its function is as follows. May be involved in Ca(2+)-dependent exocytosis of secretory vesicles through Ca(2+) and phospholipid binding to the C2 domain or may serve as Ca(2+) sensors in the process of vesicular trafficking and exocytosis. The polypeptide is Synaptotagmin-9 (Syt9) (Rattus norvegicus (Rat)).